The chain runs to 166 residues: Large ribosomal subunit protein bL9 (166 aa).

The protein belongs to the bacterial ribosomal protein bL9 family.

In terms of biological role, binds to the 23S rRNA. This is Large ribosomal subunit protein bL9 from Brachyspira hyodysenteriae (strain ATCC 49526 / WA1).